The sequence spans 234 residues: Thiamine import ATP-binding protein ThiQ (234 aa).

Positions 2 to 230 (LRFSDVKYRY…EKPPELTQYL (229 aa)) constitute an ABC transporter domain. Position 32-39 (32-39 (GPSGAGKS)) interacts with ATP.

This sequence belongs to the ABC transporter superfamily. Thiamine importer (TC 3.A.1.19.1) family. In terms of assembly, the complex is composed of two ATP-binding proteins (ThiQ), two transmembrane proteins (ThiP) and a solute-binding protein (ThiB).

The protein localises to the cell inner membrane. It catalyses the reaction thiamine(out) + ATP + H2O = thiamine(in) + ADP + phosphate + H(+). Its function is as follows. Part of the ABC transporter complex ThiBPQ involved in thiamine import. Responsible for energy coupling to the transport system. In Aliivibrio fischeri (strain ATCC 700601 / ES114) (Vibrio fischeri), this protein is Thiamine import ATP-binding protein ThiQ.